Here is a 398-residue protein sequence, read N- to C-terminus: S-adenosylmethionine decarboxylase proenzyme (398 aa).

Active-site residues include glutamate 18 and glutamate 21. Serine 78 functions as the Schiff-base intermediate with substrate; via pyruvic acid in the catalytic mechanism. Position 78 is a pyruvic acid (Ser); by autocatalysis (serine 78). Catalysis depends on cysteine 92, which acts as the Proton donor; for catalytic activity. Residues serine 243 and histidine 256 each act as proton acceptor; for processing activity in the active site.

It belongs to the eukaryotic AdoMetDC family. Requires pyruvate as cofactor. In terms of processing, is synthesized initially as an inactive proenzyme. Formation of the active enzyme involves a self-maturation process in which the active site pyruvoyl group is generated from an internal serine residue via an autocatalytic post-translational modification. Two non-identical subunits are generated from the proenzyme in this reaction, and the pyruvate is formed at the N-terminus of the alpha chain, which is derived from the carboxyl end of the proenzyme. The post-translation cleavage follows an unusual pathway, termed non-hydrolytic serinolysis, in which the side chain hydroxyl group of the serine supplies its oxygen atom to form the C-terminus of the beta chain, while the remainder of the serine residue undergoes an oxidative deamination to produce ammonia and the pyruvoyl group blocking the N-terminus of the alpha chain.

The enzyme catalyses S-adenosyl-L-methionine + H(+) = S-adenosyl 3-(methylsulfanyl)propylamine + CO2. It functions in the pathway amine and polyamine biosynthesis; S-adenosylmethioninamine biosynthesis; S-adenosylmethioninamine from S-adenosyl-L-methionine: step 1/1. The protein is S-adenosylmethionine decarboxylase proenzyme (SAMDC) of Oryza sativa subsp. indica (Rice).